A 434-amino-acid polypeptide reads, in one-letter code: Alpha-enolase (434 aa).

Residue Ser-40 coordinates Mg(2+). The substrate site is built by His-158 and Glu-167. Residue Glu-210 is the Proton donor of the active site. Residues Asp-245, Glu-293, and Asp-318 each contribute to the Mg(2+) site. Substrate is bound by residues Glu-293 and Asp-318. Lys-343 (proton acceptor) is an active-site residue. Substrate is bound by residues 370-373 (SHRS) and Lys-394.

This sequence belongs to the enolase family. In terms of assembly, homodimer. The cofactor is Mg(2+).

It localises to the cytoplasm. The enzyme catalyses (2R)-2-phosphoglycerate = phosphoenolpyruvate + H2O. It participates in carbohydrate degradation; glycolysis; pyruvate from D-glyceraldehyde 3-phosphate: step 4/5. This Xenopus laevis (African clawed frog) protein is Alpha-enolase (eno1).